Consider the following 492-residue polypeptide: Octanoyltransferase (492 aa).

The unknown stretch occupies residues 1–255 (MRCILLGSGT…GYDGLEAIID (255 aa)). The tract at residues 256–492 (EKGIRIKDFE…AVFRRNFGAL (237 aa)) is lipB domain. Residues 305–492 (RKPQNTLLFC…AVFRRNFGAL (188 aa)) enclose the BPL/LPL catalytic domain. Substrate-binding positions include 350–357 (RGGDITYH), 423–425 (AIG), and 436–438 (GFA). The Acyl-thioester intermediate role is filled by Cys-454.

It in the C-terminal section; belongs to the LipB family.

It localises to the cytoplasm. It carries out the reaction octanoyl-[ACP] + L-lysyl-[protein] = N(6)-octanoyl-L-lysyl-[protein] + holo-[ACP] + H(+). Its pathway is protein modification; protein lipoylation via endogenous pathway; protein N(6)-(lipoyl)lysine from octanoyl-[acyl-carrier-protein]: step 1/2. Its function is as follows. Catalyzes the transfer of endogenously produced octanoic acid from octanoyl-acyl-carrier-protein onto the lipoyl domains of lipoate-dependent enzymes. Lipoyl-ACP can also act as a substrate although octanoyl-ACP is likely to be the physiological substrate. This is Octanoyltransferase from Porphyromonas gingivalis (strain ATCC BAA-308 / W83).